Here is a 302-residue protein sequence, read N- to C-terminus: Sulfotransferase 1C4 (302 aa).

3'-phosphoadenylyl sulfate is bound at residue 55-60 (KAGTTW). 113–115 (KTH) contacts substrate. His115 (proton acceptor) is an active-site residue. Residues Arg137, Ser145, Tyr200, 234-239 (TSFDVM), and 262-266 (FMRKG) each bind 3'-phosphoadenylyl sulfate.

This sequence belongs to the sulfotransferase 1 family. In terms of tissue distribution, expressed in liver, kidney and jejunum.

It is found in the cytoplasm. Its subcellular location is the cytosol. It carries out the reaction a phenol + 3'-phosphoadenylyl sulfate = an aryl sulfate + adenosine 3',5'-bisphosphate + H(+). The enzyme catalyses 17beta-estradiol + 3'-phosphoadenylyl sulfate = 17beta-estradiol 3-sulfate + adenosine 3',5'-bisphosphate + H(+). The catalysed reaction is bisphenol A + 3'-phosphoadenylyl sulfate = bisphenyl A sulfate + adenosine 3',5'-bisphosphate + H(+). Functionally, sulfotransferase that utilizes 3'-phospho-5'-adenylyl sulfate (PAPS) as sulfonate donor to catalyze the sulfate conjugation of phenolic compounds and estrogen (E2). Can also sulfonate estrogenic compounds, however, the dietary flavonoids (phytoestrogen) and environmental estrogens, like bisphenol A are better substrates than 17beta-estradiol (E2). This chain is Sulfotransferase 1C4 (SULT1C4), found in Macaca fascicularis (Crab-eating macaque).